A 369-amino-acid polypeptide reads, in one-letter code: Transmembrane protein 198 (369 aa).

The next 7 membrane-spanning stretches (helical) occupy residues 37–57 (VVPS…CFFG), 60–80 (CFKA…IFLL), 93–113 (VEAS…VTML), 117–137 (VGLF…TLIG), 148–168 (SVWV…VLTL), 181–201 (VFGA…FALV), and 216–236 (VCWT…LGVL). Positions 266–308 (RQKEERRESSRKKKRKQPQSAQHTHAAKALHPEPAYRRKPNPI) are disordered.

This sequence belongs to the TMEM198 family.

The protein localises to the membrane. The protein is Transmembrane protein 198 (tmem198ab) of Danio rerio (Zebrafish).